Reading from the N-terminus, the 623-residue chain is uncharacterized protein (623 aa).

Residues 24-51 (RALVQKDELAQASQDVEDMRDCYDSLLN) are a coiled coil. Disordered stretches follow at residues 148-170 (TRQREKGRSKGGKGETFSPQQLQ), 240-343 (FSGL…TTPP), 362-393 (ALPTPVETTRSPSSTTSPGHKNVGSSNPTKAI), 454-531 (SFSG…LGYS), and 585-607 (KKLGTPSPPLTPMSLIHPPPQAL). Positions 243-259 (LEDDDGDDEIENNENDG) are enriched in acidic residues. Residues 328–343 (VSQSAPLFPENRTTPP) show a composition bias toward polar residues. Positions 364 to 379 (PTPVETTRSPSSTTSP) are enriched in low complexity. Positions 384–393 (VGSSNPTKAI) are enriched in polar residues. Positions 484–495 (PVSKLPKVSSSP) are enriched in low complexity. A compositionally biased stretch (polar residues) spans 496-506 (TASPTFVSTPK). The span at 590–606 (PSPPLTPMSLIHPPPQA) shows a compositional bias: pro residues.

This is an uncharacterized protein from Arabidopsis thaliana (Mouse-ear cress).